The following is a 689-amino-acid chain: Glycine--tRNA ligase beta subunit (689 aa).

This sequence belongs to the class-II aminoacyl-tRNA synthetase family. As to quaternary structure, tetramer of two alpha and two beta subunits.

It is found in the cytoplasm. It catalyses the reaction tRNA(Gly) + glycine + ATP = glycyl-tRNA(Gly) + AMP + diphosphate. The sequence is that of Glycine--tRNA ligase beta subunit from Escherichia coli O8 (strain IAI1).